The primary structure comprises 124 residues: Protein MGF 110-4L-B (124 aa).

Residues Met-1 to Gly-18 form the signal peptide. N-linked (GlcNAc...) asparagine; by host glycosylation is present at Asn-64. Residues Lys-121–Leu-124 carry the Prevents secretion from ER motif.

The protein belongs to the asfivirus MGF 110 family.

The protein resides in the virion. It localises to the host endoplasmic reticulum-Golgi intermediate compartment. Causes the redistribution of lumenal ER protein to an enlarged ERGIC compartment. This is Protein MGF 110-4L-B from African swine fever virus (isolate Portugal/Lis 57/1957) (ASFV).